We begin with the raw amino-acid sequence, 300 residues long: N-acetylmannosamine kinase (300 aa).

Residues 5–12 (ALDIGGTK) and 132–139 (GVGGGIVL) each bind ATP. Zn(2+)-binding residues include histidine 156, cysteine 166, cysteine 168, and cysteine 173.

It belongs to the ROK (NagC/XylR) family. NanK subfamily. In terms of assembly, homodimer.

The catalysed reaction is an N-acyl-D-mannosamine + ATP = an N-acyl-D-mannosamine 6-phosphate + ADP + H(+). Its pathway is amino-sugar metabolism; N-acetylneuraminate degradation; D-fructose 6-phosphate from N-acetylneuraminate: step 2/5. Functionally, catalyzes the phosphorylation of N-acetylmannosamine (ManNAc) to ManNAc-6-P. This chain is N-acetylmannosamine kinase, found in Haemophilus influenzae (strain 86-028NP).